The chain runs to 89 residues: Small ribosomal subunit protein bS20 (89 aa).

Positions 1-12 (MANIKSAKKRAK) are enriched in basic residues. The interval 1–22 (MANIKSAKKRAKQTIVRNERNT) is disordered.

This sequence belongs to the bacterial ribosomal protein bS20 family.

Binds directly to 16S ribosomal RNA. This chain is Small ribosomal subunit protein bS20, found in Xanthomonas oryzae pv. oryzae (strain KACC10331 / KXO85).